Consider the following 641-residue polypeptide: Macrolide export ATP-binding/permease protein MacB (641 aa).

In terms of domain architecture, ABC transporter spans 2-240 (IKLENIKKSF…LKQNLKEIKP (239 aa)). 38–45 (GQSGSGKS) lines the ATP pocket. Transmembrane regions (helical) follow at residues 268–288 (FLTM…VALA), 516–536 (LLIS…VMNI), 565–585 (FLIE…GLAY), and 601–621 (IFST…GIVF).

This sequence belongs to the ABC transporter superfamily. Macrolide exporter (TC 3.A.1.122) family. Homodimer.

Its subcellular location is the cell inner membrane. Its function is as follows. Non-canonical ABC transporter that contains transmembrane domains (TMD), which form a pore in the inner membrane, and an ATP-binding domain (NBD), which is responsible for energy generation. Confers resistance against macrolides. The sequence is that of Macrolide export ATP-binding/permease protein MacB from Campylobacter fetus subsp. fetus (strain 82-40).